A 711-amino-acid chain; its full sequence is Polyribonucleotide nucleotidyltransferase (711 aa).

Mg(2+) contacts are provided by D486 and D492. A KH domain is found at 553–612 (PRIHTIKISTDKIKDVIGKGGSVIRALTEETGTTIEIEDDGTVKIAATDGEKAKYAIRRI). The S1 motif domain occupies 622–690 (GRIYNGKVTR…RQGRVRLSIK (69 aa)). Residues 689–711 (IKEATEQTQPAAAPEAPTSEQGE) are disordered. Positions 694 to 711 (EQTQPAAAPEAPTSEQGE) are enriched in low complexity.

This sequence belongs to the polyribonucleotide nucleotidyltransferase family. Component of the RNA degradosome, which is a multiprotein complex involved in RNA processing and mRNA degradation. It depends on Mg(2+) as a cofactor.

Its subcellular location is the cytoplasm. The catalysed reaction is RNA(n+1) + phosphate = RNA(n) + a ribonucleoside 5'-diphosphate. In terms of biological role, involved in mRNA degradation. Catalyzes the phosphorolysis of single-stranded polyribonucleotides processively in the 3'- to 5'-direction. This Salmonella arizonae (strain ATCC BAA-731 / CDC346-86 / RSK2980) protein is Polyribonucleotide nucleotidyltransferase.